The chain runs to 481 residues: Glutamyl-tRNA(Gln) amidotransferase subunit A (481 aa).

Residues lysine 76 and serine 151 each act as charge relay system in the active site. Catalysis depends on serine 175, which acts as the Acyl-ester intermediate.

This sequence belongs to the amidase family. GatA subfamily. As to quaternary structure, heterotrimer of A, B and C subunits.

It carries out the reaction L-glutamyl-tRNA(Gln) + L-glutamine + ATP + H2O = L-glutaminyl-tRNA(Gln) + L-glutamate + ADP + phosphate + H(+). Allows the formation of correctly charged Gln-tRNA(Gln) through the transamidation of misacylated Glu-tRNA(Gln) in organisms which lack glutaminyl-tRNA synthetase. The reaction takes place in the presence of glutamine and ATP through an activated gamma-phospho-Glu-tRNA(Gln). This chain is Glutamyl-tRNA(Gln) amidotransferase subunit A, found in Neisseria gonorrhoeae (strain NCCP11945).